A 250-amino-acid chain; its full sequence is NAD(P)H-quinone oxidoreductase subunit K, chloroplastic (250 aa).

4 residues coordinate [4Fe-4S] cluster: Cys67, Cys68, Cys132, and Cys163.

The protein belongs to the complex I 20 kDa subunit family. As to quaternary structure, NDH is composed of at least 16 different subunits, 5 of which are encoded in the nucleus. [4Fe-4S] cluster serves as cofactor.

It is found in the plastid. Its subcellular location is the chloroplast thylakoid membrane. It carries out the reaction a plastoquinone + NADH + (n+1) H(+)(in) = a plastoquinol + NAD(+) + n H(+)(out). The catalysed reaction is a plastoquinone + NADPH + (n+1) H(+)(in) = a plastoquinol + NADP(+) + n H(+)(out). NDH shuttles electrons from NAD(P)H:plastoquinone, via FMN and iron-sulfur (Fe-S) centers, to quinones in the photosynthetic chain and possibly in a chloroplast respiratory chain. The immediate electron acceptor for the enzyme in this species is believed to be plastoquinone. Couples the redox reaction to proton translocation, and thus conserves the redox energy in a proton gradient. This chain is NAD(P)H-quinone oxidoreductase subunit K, chloroplastic, found in Adiantum capillus-veneris (Maidenhair fern).